A 763-amino-acid chain; its full sequence is U3 small nucleolar RNA-associated protein 25 homolog (763 aa).

The tract at residues 1–164 (MGKRRSRGRS…SQKSSEEFTD (164 aa)) is disordered. 2 promotes p53/TP53 degradation regions span residues 1-190 (MGKR…SQRT) and 580-642 (VQLP…KKEE). Ser-10 bears the Phosphoserine mark. Over residues 25–43 (RDFGEEHPFYDRVSKKEVK) the composition is skewed to basic and acidic residues. Ser-52, Ser-60, and Ser-64 each carry phosphoserine. Residues 54–70 (DSSHSESESESEQEHVS) show a composition bias toward basic and acidic residues. The span at 84 to 119 (EEEEEEEEEEEEEEEDKEEVDDSAVGDSEMNGEDGG) shows a compositional bias: acidic residues. The interval 643–704 (LNFTHICEYT…YELPTYAHFY (62 aa)) is represses p53/TP53 degradation.

This sequence belongs to the UTP25 family. As to quaternary structure, interacts with CAPN3; the interaction is required for CAPN3 translocation to the nucleolus. Phosphorylated. Phosphorylation is required to promote p53/TP53 degradation in the nucleolus which promotes cell cycle progression and liver development.

The protein localises to the nucleus. Its subcellular location is the nucleolus. Component of the ribosomal small subunit processome for the biogenesis of ribosomes, functions in pre-ribosomal RNA (pre-rRNA) processing. Essential for embryonic development in part through the regulation of p53 pathway. Controls the expansion growth of digestive organs and liver. Also involved in the sympathetic neuronal development. Mediates, with CAPN3, the proteasome-independent degradation of p53/TP53. This Rattus norvegicus (Rat) protein is U3 small nucleolar RNA-associated protein 25 homolog.